Consider the following 116-residue polypeptide: Large ribosomal subunit protein bL19 (116 aa).

Belongs to the bacterial ribosomal protein bL19 family.

Functionally, this protein is located at the 30S-50S ribosomal subunit interface and may play a role in the structure and function of the aminoacyl-tRNA binding site. In Fusobacterium nucleatum subsp. nucleatum (strain ATCC 25586 / DSM 15643 / BCRC 10681 / CIP 101130 / JCM 8532 / KCTC 2640 / LMG 13131 / VPI 4355), this protein is Large ribosomal subunit protein bL19.